The primary structure comprises 959 residues: E3 ubiquitin-protein ligase arkadia-B (959 aa).

Polar residues predominate over residues 51–66 (CSDTNKQQSDLNSNGT). Disordered regions lie at residues 51–171 (CSDT…VSSL), 189–212 (RKRFVKNVSSQRTQKQKERMMLQR), and 225–271 (LLPS…SGGM). A compositionally biased stretch (low complexity) spans 112 to 131 (SSFSDCISSPSSSSHFGDSD). Over residues 142–156 (PLSSVNSTPRTQSAR) the composition is skewed to polar residues. The segment covering 228 to 246 (SSSSSSENDLSSESSSSSS) has biased composition (low complexity). Positions 256–267 (TGENRQDGTTLP) are enriched in polar residues. The SUMO interaction motif 1 (SIM) motif lies at 275 to 279 (VVVIE). An SUMO interaction motif 2 (SIM) motif is present at residues 300–306 (EVEIVTV). Residues 318–341 (HPRSHWGQNSQSGRTQEQRTRNRV) form a disordered region. Over residues 323–332 (WGQNSQSGRT) the composition is skewed to polar residues. The short motif at 355-359 (VVDLT) is the SUMO interaction motif 3 (SIM) element. The span at 370–397 (TTSGRVESQPVSIVSSLTSTSEPASDSM) shows a compositional bias: polar residues. 4 disordered regions span residues 370–399 (TTSGRVESQPVSIVSSLTSTSEPASDSMSG), 475–499 (HFPHHHHHHHHSSHPGVPLSPSFRD), 615–649 (PRPLHHQTSSCPHSNSASQPPPPPPPPPPPPMDYV), and 661–680 (PSLTSTHAVPPPPPSHHLSA). Basic residues predominate over residues 475-487 (HFPHHHHHHHHSS). Over residues 620–632 (HQTSSCPHSNSAS) the composition is skewed to polar residues. The segment covering 633 to 646 (QPPPPPPPPPPPPM) has biased composition (pro residues). The interval 872 to 874 (YPH) is ubiquitin binding. Zn(2+) contacts are provided by C907 and C910. An RING-type; atypical zinc finger spans residues 907–948 (CTICLSILEEGEDVRRLPCMHLFHQVCVDQWLITNKKCPICR). A ubiquitin binding region spans residues 922-926 (RLPCM). The Zn(2+) site is built by H930 and C933.

The protein belongs to the Arkadia family. As to quaternary structure, monomer.

The protein localises to the nucleus. Its subcellular location is the cytoplasm. The protein resides in the PML body. The catalysed reaction is S-ubiquitinyl-[E2 ubiquitin-conjugating enzyme]-L-cysteine + [acceptor protein]-L-lysine = [E2 ubiquitin-conjugating enzyme]-L-cysteine + N(6)-ubiquitinyl-[acceptor protein]-L-lysine.. Its pathway is protein modification; protein ubiquitination. With respect to regulation, binds free ubiquitin non-covalently via its RING-type zinc finger. Ubiquitin-binding leads to enhance the E3 ubiquitin-protein ligase activity by stabilizing the ubiquitin-conjugating enzyme E2 (donor ubiquitin) in the 'closed' conformation and activating ubiquitin transfer. Its function is as follows. E3 ubiquitin-protein ligase required for mesoderm patterning during embryonic development. Acts as an enhancer of the transcriptional responses of the smad2/smad3 effectors, which are activated downstream of BMP. Acts by mediating ubiquitination and degradation of SMAD inhibitors such as smad7, inducing their proteasomal degradation and thereby enhancing the transcriptional activity of TGF-beta and BMP. Specifically binds polysumoylated chains via SUMO interaction motifs (SIMs) and mediates ubiquitination of sumoylated substrates. The regulation of the BMP-SMAD signaling is however independent of sumoylation and is not dependent of SUMO interaction motifs (SIMs). This chain is E3 ubiquitin-protein ligase arkadia-B (rnf111-b), found in Xenopus laevis (African clawed frog).